A 94-amino-acid polypeptide reads, in one-letter code: Large ribosomal subunit protein bL25 (94 aa).

Residues 1-20 (MFKFNAEVRQSQGKGASRRL) are disordered.

Belongs to the bacterial ribosomal protein bL25 family. In terms of assembly, part of the 50S ribosomal subunit; part of the 5S rRNA/L5/L18/L25 subcomplex. Contacts the 5S rRNA. Binds to the 5S rRNA independently of L5 and L18.

In terms of biological role, this is one of the proteins that binds to the 5S RNA in the ribosome where it forms part of the central protuberance. This is Large ribosomal subunit protein bL25 from Pasteurella multocida (strain Pm70).